Consider the following 120-residue polypeptide: Large ribosomal subunit protein uL14 (120 aa).

Belongs to the universal ribosomal protein uL14 family. As to quaternary structure, part of the 50S ribosomal subunit. Forms a cluster with proteins L3 and L19. In the 70S ribosome, L14 and L19 interact and together make contacts with the 16S rRNA in bridges B5 and B8.

Binds to 23S rRNA. Forms part of two intersubunit bridges in the 70S ribosome. This Phytoplasma australiense protein is Large ribosomal subunit protein uL14.